The sequence spans 48 residues: MSFDNNYHGGQGYAKGGLGCSYGCGLSGYGYACYCPWCYERSWFSGCF.

As to quaternary structure, interacts with hair keratins.

In terms of biological role, in the hair cortex, hair keratin intermediate filaments are embedded in an interfilamentous matrix, consisting of hair keratin-associated proteins (KRTAP), which are essential for the formation of a rigid and resistant hair shaft through their extensive disulfide bond cross-linking with abundant cysteine residues of hair keratins. The matrix proteins include the high-sulfur and high-glycine-tyrosine keratins. This chain is Keratin-associated protein 22-1 (KRTAP22-1), found in Homo sapiens (Human).